The following is a 434-amino-acid chain: MHVIVLGSGVIGTTTAYYLARQGAKVTVLDRQPEAACETSYANAGQVSPGYSTPWAAPGIPFKALKWLFQKDAPLAIRPDGTLYQWRWMAAMLANCTAGRYTVNKERMLRLAEYSRDCLRELRADTGIQYEARTLGTLQLFRSASQYQAAQRDIQVLDACGVPYELLDSARLQTVEPALARTAHKLAGGLRLPNDETGDCRLFTRRLAQLAAGLGVEFRYGQDVEALVAGGAEIRGVRVGGETLAADRYVAAFGSYTRGFLAPLGLELPVYPVKGYSLTIPLASAEAAPVSTVLDETYKVAITRFDNRIRVGGMAELAGFDLGLNPAHRRTLEHVVTDLYPGCGEVAQAEFWTGLRPMTPDSTPIVGATRYANLFLNTGHGTLGWTMACGSGKVVADLVTGQRPAIRADDLALARYQAAQTRHAGPALGERSAA.

3–17 (VIVLGSGVIGTTTAY) is a binding site for FAD.

Belongs to the DadA oxidoreductase family. The cofactor is FAD.

It carries out the reaction a D-alpha-amino acid + A + H2O = a 2-oxocarboxylate + AH2 + NH4(+). It functions in the pathway amino-acid degradation; D-alanine degradation; NH(3) and pyruvate from D-alanine: step 1/1. In terms of biological role, oxidative deamination of D-amino acids. This chain is D-amino acid dehydrogenase, found in Bordetella petrii (strain ATCC BAA-461 / DSM 12804 / CCUG 43448).